A 288-amino-acid polypeptide reads, in one-letter code: 4-diphosphocytidyl-2-C-methyl-D-erythritol kinase (288 aa).

K22 is a catalytic residue. 104–114 contributes to the ATP binding site; that stretch reads PSQAGLGGGSS. D146 is an active-site residue.

This sequence belongs to the GHMP kinase family. IspE subfamily.

The catalysed reaction is 4-CDP-2-C-methyl-D-erythritol + ATP = 4-CDP-2-C-methyl-D-erythritol 2-phosphate + ADP + H(+). The protein operates within isoprenoid biosynthesis; isopentenyl diphosphate biosynthesis via DXP pathway; isopentenyl diphosphate from 1-deoxy-D-xylulose 5-phosphate: step 3/6. Functionally, catalyzes the phosphorylation of the position 2 hydroxy group of 4-diphosphocytidyl-2C-methyl-D-erythritol. The chain is 4-diphosphocytidyl-2-C-methyl-D-erythritol kinase from Protochlamydia amoebophila (strain UWE25).